A 305-amino-acid chain; its full sequence is Glycine--tRNA ligase alpha subunit (305 aa).

The protein belongs to the class-II aminoacyl-tRNA synthetase family. In terms of assembly, tetramer of two alpha and two beta subunits.

The protein localises to the cytoplasm. It carries out the reaction tRNA(Gly) + glycine + ATP = glycyl-tRNA(Gly) + AMP + diphosphate. The polypeptide is Glycine--tRNA ligase alpha subunit (Streptococcus pneumoniae (strain 70585)).